The primary structure comprises 133 residues: Adenosine 5'-monophosphoramidase hnt1 (133 aa).

Positions 4 to 107 (IFCKIVKGDI…IPKPNEEYGL (104 aa)) constitute an HIT domain. AMP-binding positions include 29–30 (DI), asparagine 81, 87–89 (HQF), and 94–96 (HFH). The Histidine triad motif motif lies at 92-96 (HVHFH). Histidine 94 acts as the Tele-AMP-histidine intermediate in catalysis.

This sequence belongs to the HINT family. Homodimer. Mg(2+) is required as a cofactor.

The protein localises to the nucleus. It carries out the reaction adenosine 5'-phosphoramidate + H2O = AMP + NH4(+). Its function is as follows. Hydrolyzes adenosine 5'-monophosphoramidate substrates such as AMP-morpholidate, AMP-N-alanine methyl ester, AMP-alpha-acetyl lysine methyl ester and AMP-NH2. The chain is Adenosine 5'-monophosphoramidase hnt1 (hnt1) from Schizosaccharomyces pombe (strain 972 / ATCC 24843) (Fission yeast).